Here is an 831-residue protein sequence, read N- to C-terminus: Periplasmic nitrate reductase (831 aa).

The segment at residues M1 to A29 is a signal peptide (tat-type signal). Residues L41–D97 form the 4Fe-4S Mo/W bis-MGD-type domain. Residues C48, C51, C55, and C83 each contribute to the [4Fe-4S] cluster site. Mo-bis(molybdopterin guanine dinucleotide)-binding positions include K85, Q152, N177, C181, W214 to M221, S245 to H249, Q264 to D266, M375, Q379, N485, S511 to D512, K534, D561, and T721 to S730. Position 797 (W797) interacts with substrate. N805 and K822 together coordinate Mo-bis(molybdopterin guanine dinucleotide).

It belongs to the prokaryotic molybdopterin-containing oxidoreductase family. NasA/NapA/NarB subfamily. As to quaternary structure, component of the periplasmic nitrate reductase NapAB complex composed of NapA and NapB. [4Fe-4S] cluster serves as cofactor. It depends on Mo-bis(molybdopterin guanine dinucleotide) as a cofactor. In terms of processing, predicted to be exported by the Tat system. The position of the signal peptide cleavage has not been experimentally proven.

It localises to the periplasm. It carries out the reaction 2 Fe(II)-[cytochrome] + nitrate + 2 H(+) = 2 Fe(III)-[cytochrome] + nitrite + H2O. Functionally, catalytic subunit of the periplasmic nitrate reductase complex NapAB. Receives electrons from NapB and catalyzes the reduction of nitrate to nitrite. In Cupriavidus pinatubonensis (strain JMP 134 / LMG 1197) (Cupriavidus necator (strain JMP 134)), this protein is Periplasmic nitrate reductase.